We begin with the raw amino-acid sequence, 116 residues long: NADH-ubiquinone oxidoreductase chain 3 (116 aa).

A run of 3 helical transmembrane segments spans residues 3 to 23 (LLMT…IVSF), 56 to 76 (FFLI…LLPL), and 85 to 105 (PLLT…GLIY).

The protein belongs to the complex I subunit 3 family.

It localises to the mitochondrion membrane. It catalyses the reaction a ubiquinone + NADH + 5 H(+)(in) = a ubiquinol + NAD(+) + 4 H(+)(out). In terms of biological role, core subunit of the mitochondrial membrane respiratory chain NADH dehydrogenase (Complex I) that is believed to belong to the minimal assembly required for catalysis. Complex I functions in the transfer of electrons from NADH to the respiratory chain. The immediate electron acceptor for the enzyme is believed to be ubiquinone. This chain is NADH-ubiquinone oxidoreductase chain 3 (MT-ND3), found in Paralichthys olivaceus (Bastard halibut).